Here is a 264-residue protein sequence, read N- to C-terminus: Interleukin-33 (264 aa).

The homeodomain-like HTH domain stretch occupies residues 1–67 (MRPRMKYSNS…ETCYFGKEPA (67 aa)). A propeptide spanning residues 1 to 101 (MRPRMKYSNS…RSLLGSIQAF (101 aa)) is cleaved from the precursor. The segment at 66-108 (PAKRYSLKSGSKHEGRLSTCLPDSRKRSLLGSIQAFAASVDTL) is interaction with RELA.

Belongs to the IL-1 family. Highly divergent. Forms a 1:1:1 heterotrimeric complex with its primary high-affinity receptor IL1RL1 and the coreceptor IL1RAP. Interacts with cargo receptor TMED10; the interaction mediates the translocation from the cytoplasm into the ERGIC (endoplasmic reticulum-Golgi intermediate compartment) and thereby secretion. In terms of processing, the full-length protein can be released from cells and is able to signal via the IL1RL1/ST2 receptor. However, proteolytic processing by CELA1, CSTG/cathepsin G and ELANE/neutrophil elastase produces C-terminal peptides that are more active than the unprocessed full-length protein. May also be proteolytically processed by calpains. Proteolytic cleavage mediated by apoptotic caspases including CASP3 and CASP7 results in IL33 inactivation. In vitro proteolytic cleavage by CASP1 was reported but could not be confirmed in vivo suggesting that IL33 is probably not a direct substrate for that caspase.

Its subcellular location is the nucleus. It is found in the chromosome. The protein localises to the cytoplasm. It localises to the cytoplasmic vesicle. The protein resides in the secretory vesicle. Its subcellular location is the secreted. In terms of biological role, cytokine that binds to and signals through the IL1RL1/ST2 receptor which in turn activates NF-kappa-B and MAPK signaling pathways in target cells. Involved in the maturation of Th2 cells inducing the secretion of T-helper type 2-associated cytokines. Also involved in activation of mast cells, basophils, eosinophils and natural killer cells. Acts as a chemoattractant for Th2 cells, and may function as an 'alarmin', that amplifies immune responses during tissue injury. Induces rapid UCP2-dependent mitochondrial rewiring that attenuates the generation of reactive oxygen species and preserves the integrity of Krebs cycle required for persistent production of itaconate and subsequent GATA3-dependent differentiation of inflammation-resolving alternatively activated macrophages. Functionally, in quiescent endothelia the uncleaved form is constitutively and abundantly expressed, and acts as a chromatin-associated nuclear factor with transcriptional repressor properties, it may sequester nuclear NF-kappaB/RELA, lowering expression of its targets. This form is rapidely lost upon angiogenic or pro-inflammatory activation. The protein is Interleukin-33 of Rattus norvegicus (Rat).